The chain runs to 333 residues: Trans-enoyl reductase apdC (333 aa).

Residue 45–48 coordinates NADP(+); the sequence is FDAK. 131–138 is a substrate binding site; that stretch reads VGLATVGM. NADP(+)-binding positions include 167–170, Y185, and 232–233; these read SPHN and LD. 252 to 256 provides a ligand contact to substrate; it reads SVTMY. 321–322 contacts NADP(+); sequence VS.

The protein belongs to the zinc-containing alcohol dehydrogenase family. As to quaternary structure, monomer.

It participates in secondary metabolite biosynthesis. Functionally, trans-enoyl reductase; part of the gene cluster that mediates the biosynthesis of aspyridones. The polyketide-amino acid backbone preaspyridone A is first assembled by the PKS-NRPS hybrid apdA. The assembly of preaspyridone A is initiated by loading of malonyl-CoA onto apdA, followed by decarboxylation to yield the acetyl starter unit. The growing polyketide chain then elongates into a tetraketide. The adpA PKS module catalyzes three Claisen condensations, as well as beta-keto processing and methylation. Alpha-methylation step during polyketide synthesis is a prerequisite and a key checkpoint for chain transfer between PKS and NRPS modules. The downstream NRPS module contains the condensation (C), adenylation (A), and thiolation (T) domains and catalyzes the incorporation of tyrosine via the formation of the L-tyrosinyl-thioester and the amide linkage between L-tyrosinyl-thioester and the tetraketide. The bimodular assembly line is terminated with a reductase (R) domain that facilitates formation and release of the tetramic acid product. Because apdA lacks a designated enoylreductase (ER) domain, the required activity is provided the enoyl reductase apdC. ApdC appears to operate with different stereoselectivity in different PKS cycle. Combined with apdC, apdA is proposed to synthesize preaspyridone A via about 20 enzymatic steps. A number of oxidative steps performed successively by the cytochrome P450 monooxygenases apdE and apdB are required for the conversion of preaspyridone A to aspyridone A. The cytochrome P450 monooxygenase apdE is responsible for the oxidative dephenylation of preaspyridone A. Finally, the predicted FAD-dependent monooxygenase apdD and the acyl-CoA dehydrogenase apdG may be involved in the transformation of aspyridone A into aspyridone B. The chain is Trans-enoyl reductase apdC from Emericella nidulans (strain FGSC A4 / ATCC 38163 / CBS 112.46 / NRRL 194 / M139) (Aspergillus nidulans).